Consider the following 366-residue polypeptide: Anhydro-N-acetylmuramic acid kinase (366 aa).

Position 10–17 (G10–D17) interacts with ATP.

It belongs to the anhydro-N-acetylmuramic acid kinase family.

It catalyses the reaction 1,6-anhydro-N-acetyl-beta-muramate + ATP + H2O = N-acetyl-D-muramate 6-phosphate + ADP + H(+). It participates in amino-sugar metabolism; 1,6-anhydro-N-acetylmuramate degradation. Its pathway is cell wall biogenesis; peptidoglycan recycling. Functionally, catalyzes the specific phosphorylation of 1,6-anhydro-N-acetylmuramic acid (anhMurNAc) with the simultaneous cleavage of the 1,6-anhydro ring, generating MurNAc-6-P. Is required for the utilization of anhMurNAc either imported from the medium or derived from its own cell wall murein, and thus plays a role in cell wall recycling. In Legionella pneumophila subsp. pneumophila (strain Philadelphia 1 / ATCC 33152 / DSM 7513), this protein is Anhydro-N-acetylmuramic acid kinase.